We begin with the raw amino-acid sequence, 118 residues long: Thioredoxin H3 (118 aa).

Alanine 2 bears the N-acetylalanine mark. One can recognise a Thioredoxin domain in the interval 2–113; the sequence is AAEGEVIACH…IIANLEKHKT (112 aa). Active-site nucleophile residues include cysteine 39 and cysteine 42. An intrachain disulfide couples cysteine 39 to cysteine 42.

It belongs to the thioredoxin family. Plant H-type subfamily. As to quaternary structure, interacts with FBA5 and FBA8. Interacts with FBA6. Interacts with MDH1.

It is found in the cytoplasm. Its function is as follows. Thiol-disulfide oxidoreductase that possesses disulfide reductase and insulin disulfide bonds reducing activities. Heat shock causes oligomerization and formation of high molecular weight (HMW) complexes with concomitant functional switching from a disulfide reductase to chaperone. The polypeptide is Thioredoxin H3 (TRX3) (Arabidopsis thaliana (Mouse-ear cress)).